The primary structure comprises 255 residues: Cytochrome b561 and DOMON domain-containing protein At5g48750 (255 aa).

An N-terminal signal peptide occupies residues 1-27 (MFLSSRTIFVGLCFLFVLAPCFTRATT). Residues 54 to 169 (LDSFLHYSYV…TVVNHLWQDG (116 aa)) form the DOMON domain. The region spanning 176 to 255 (RLGMHAMSGN…DPTWFYILIL (80 aa)) is the Cytochrome b561 domain. Residues 216–236 (IHGLVNAVCWGIFIPIGVMAA) traverse the membrane as a helical segment.

The protein resides in the membrane. The sequence is that of Cytochrome b561 and DOMON domain-containing protein At5g48750 from Arabidopsis thaliana (Mouse-ear cress).